A 147-amino-acid chain; its full sequence is Protegrin-2 (147 aa).

Positions 1 to 29 are cleaved as a signal peptide; the sequence is METQRASLCLGRWSLWLLLLALVVPSASA. Positions 30 to 130 are excised as a propeptide; the sequence is QALSYREAVL…DITCNEVQGV (101 aa). A disordered region spans residues 61–80; the sequence is DQPPKADEDPGTPKPVSFTV. 4 cysteine pairs are disulfide-bonded: Cys-85/Cys-96, Cys-107/Cys-124, Cys-136/Cys-145, and Cys-138/Cys-143. At Val-146 the chain carries Valine amide.

Belongs to the cathelicidin family.

It is found in the secreted. Microbicidal activity. Active against E.coli, Listeria monocytogenes and C.albicans, in vitro. This Sus scrofa (Pig) protein is Protegrin-2 (NPG2).